The chain runs to 445 residues: FAS-associated factor 2-A (445 aa).

A UBA domain is found at 12-53 (EQTEKLLQFQDLTGIESMDQCRQTLQQHNWNIEAAVQDRLNE). The stretch at 275 to 353 (SERLEREERN…ERKSECLPAE (79 aa)) forms a coiled coil. The segment at 302 to 354 (RADQEKERKKKEKQEQKRREEEEAQRKQMLEERKKRNLEEEKERKSECLPAEP) is disordered. A compositionally biased stretch (basic and acidic residues) spans 303 to 348 (ADQEKERKKKEKQEQKRREEEEAQRKQMLEERKKRNLEEEKERKSE). Residues 357-439 (DHPDNVKIIF…GLSQSQLLFV (83 aa)) form the UBX domain.

The protein resides in the cytoplasm. The protein localises to the lipid droplet. Its subcellular location is the endoplasmic reticulum. Plays an important role in endoplasmic reticulum-associated degradation (ERAD) that mediates ubiquitin-dependent degradation of misfolded endoplasmic reticulum proteins. Involved in inhibition of lipid droplet degradation. Involved in stress granule disassembly. The chain is FAS-associated factor 2-A (faf2-a) from Xenopus laevis (African clawed frog).